The chain runs to 114 residues: Beta-microseminoprotein E1 (114 aa).

The signal sequence occupies residues 1-20 (MNVLLGGLVIFATFVTLCNG). Cystine bridges form between Cys-22–Cys-70, Cys-38–Cys-62, Cys-57–Cys-93, Cys-60–Cys-69, and Cys-84–Cys-107.

This sequence belongs to the beta-microseminoprotein family.

It localises to the secreted. In Saguinus oedipus (Cotton-top tamarin), this protein is Beta-microseminoprotein E1 (MSPE).